The following is a 320-amino-acid chain: Ribosomal RNA small subunit methyltransferase H (320 aa).

Residues 42–44 (GGH), Asp-62, Phe-86, Asp-108, and Gln-115 each bind S-adenosyl-L-methionine.

Belongs to the methyltransferase superfamily. RsmH family.

The protein resides in the cytoplasm. The enzyme catalyses cytidine(1402) in 16S rRNA + S-adenosyl-L-methionine = N(4)-methylcytidine(1402) in 16S rRNA + S-adenosyl-L-homocysteine + H(+). Specifically methylates the N4 position of cytidine in position 1402 (C1402) of 16S rRNA. The sequence is that of Ribosomal RNA small subunit methyltransferase H from Yersinia enterocolitica serotype O:8 / biotype 1B (strain NCTC 13174 / 8081).